The following is a 211-amino-acid chain: Large ribosomal subunit protein uL4 (211 aa).

Over residues 41–53 the composition is skewed to polar residues; the sequence is QAHSRQGTASTLT. The interval 41–78 is disordered; sequence QAHSRQGTASTLTRAEVRGGGRKPYKQKGTGRARQGTI. Basic residues predominate over residues 60–71; the sequence is GGRKPYKQKGTG.

The protein belongs to the universal ribosomal protein uL4 family. As to quaternary structure, part of the 50S ribosomal subunit.

Its function is as follows. One of the primary rRNA binding proteins, this protein initially binds near the 5'-end of the 23S rRNA. It is important during the early stages of 50S assembly. It makes multiple contacts with different domains of the 23S rRNA in the assembled 50S subunit and ribosome. Functionally, forms part of the polypeptide exit tunnel. This is Large ribosomal subunit protein uL4 from Prochlorococcus marinus (strain MIT 9303).